The chain runs to 197 residues: Cerebellin-3 (197 aa).

An N-terminal signal peptide occupies residues 1 to 24; it reads MGTEWHKPKLSLALVLLTLEAGWA. A C1q domain is found at 59–197; sequence APPGRVAFAA…SFSGFLIFPL (139 aa). The interval 64-197 is necessary for interaction with CBLN3, and homotrimerization; sequence VAFAAVRSHH…SFSGFLIFPL (134 aa). The N-linked (GlcNAc...) asparagine glycan is linked to Asn-82.

Heterohexamer; disulfide-linked heterotrimers. Interacts with CBLN1. May also form oligomers with CBLN2 and CBLN4. Expressed in brain, restricted to the cerebellar cortex. Within the cerebellum, expressed in granule layers (at protein level). Also detected in postsynaptic Purkinje cell spines (at protein level).

Its subcellular location is the endoplasmic reticulum. It localises to the golgi apparatus. The protein localises to the cis-Golgi network. It is found in the secreted. The protein resides in the synapse. Its function is as follows. May be involved in synaptic functions in the CNS. The chain is Cerebellin-3 (Cbln3) from Mus musculus (Mouse).